Here is a 1384-residue protein sequence, read N- to C-terminus: ATP-dependent RNA helicase TDRD9 (1384 aa).

A disordered region spans residues 35–60 (EAPREEVQRSEEVPSEAPTAQAQDPV). Over residues 36 to 46 (APREEVQRSEE) the composition is skewed to basic and acidic residues. The Helicase ATP-binding domain maps to 144-310 (ISLIESNSVV…FAVPVQNKMN (167 aa)). 157-164 (GATGSGKS) is an ATP binding site. A DEAH box motif is present at residues 256 to 259 (DEVH). In terms of domain architecture, Helicase C-terminal spans 379–546 (SGAQFVSERS…VLKVKLLDMG (168 aa)). The 61-residue stretch at 946–1006 (HPHPDLVCLA…REIPCQLLEL (61 aa)) folds into the Tudor domain.

Belongs to the DEAD box helicase family. DEAH subfamily. As to quaternary structure, interacts with piRNA-associated proteins PIWIL1 and PIWIL4.

Its subcellular location is the cytoplasm. It localises to the nucleus. The enzyme catalyses ATP + H2O = ADP + phosphate + H(+). Its function is as follows. ATP-binding RNA helicase which plays a central role during spermatogenesis by repressing transposable elements and preventing their mobilization, which is essential for the germline integrity. Acts via the piRNA metabolic process, which mediates the repression of transposable elements during meiosis by forming complexes composed of piRNAs and Piwi proteins and governs the methylation and subsequent repression of transposons. Acts downstream of piRNA biogenesis: exclusively required for transposon silencing in the nucleus, suggesting that it acts as a nuclear effector in the nucleus together with PIWIL4. The sequence is that of ATP-dependent RNA helicase TDRD9 from Rattus norvegicus (Rat).